Consider the following 460-residue polypeptide: UDP-glycosyltransferase 74B1 (460 aa).

His-22 acts as the Proton acceptor in catalysis. His-22 lines the an anthocyanidin pocket. Asp-113 functions as the Charge relay in the catalytic mechanism. UDP-alpha-D-glucose-binding residues include Thr-135, Gln-339, His-354, Trp-357, Asn-358, Ser-359, Glu-362, Asp-378, and Gln-379.

The protein belongs to the UDP-glycosyltransferase family. As to expression, expressed in the vasculature, the apical meristems of roots, shoots and inflorescence, and the junction of organ or branches.

It carries out the reaction (Z)-2-phenyl-1-thioacetohydroximate + UDP-alpha-D-glucose = (Z)-desulfoglucotropeolin + UDP. The catalysed reaction is a (Z)-omega-(methylsulfanyl)alkyl-thiohydroximate + UDP-alpha-D-glucose = an aliphatic (Z)-desulfo-glucosinolate + UDP. The enzyme catalyses (Z)-2-(indol-3-yl)-1-thioacetohydroximate + UDP-alpha-D-glucose = (Z)-indolylmethyl desulfoglucosinolate + UDP. In terms of biological role, involved in the biosynthesis of glucosinolate. In in vitro assay, may use phenylacetothiohydroximate (PATH), but not phenylacetic acid (PAA), indole-3-acetic acid (IAA) or salicylic acid (SA) as substrate. Specific for the thiohydroximate functional group and does not glucosylate the carboxylate group or a hydroxyl group. The polypeptide is UDP-glycosyltransferase 74B1 (UGT74B1) (Arabidopsis thaliana (Mouse-ear cress)).